Here is a 485-residue protein sequence, read N- to C-terminus: UDP-N-acetylmuramate--L-alanine ligase (485 aa).

Residue 127-133 (GTHGKTT) coordinates ATP.

Belongs to the MurCDEF family.

It is found in the cytoplasm. It carries out the reaction UDP-N-acetyl-alpha-D-muramate + L-alanine + ATP = UDP-N-acetyl-alpha-D-muramoyl-L-alanine + ADP + phosphate + H(+). It participates in cell wall biogenesis; peptidoglycan biosynthesis. Its function is as follows. Cell wall formation. In Shewanella frigidimarina (strain NCIMB 400), this protein is UDP-N-acetylmuramate--L-alanine ligase.